The sequence spans 245 residues: tRNA pseudouridine synthase A (245 aa).

Residue Asp52 is the Nucleophile of the active site. Tyr111 is a binding site for substrate.

The protein belongs to the tRNA pseudouridine synthase TruA family. As to quaternary structure, homodimer.

It catalyses the reaction uridine(38/39/40) in tRNA = pseudouridine(38/39/40) in tRNA. Its function is as follows. Formation of pseudouridine at positions 38, 39 and 40 in the anticodon stem and loop of transfer RNAs. In Xanthobacter autotrophicus (strain ATCC BAA-1158 / Py2), this protein is tRNA pseudouridine synthase A.